A 913-amino-acid polypeptide reads, in one-letter code: Transient receptor potential cation channel protein painless (913 aa).

Over 1 to 490 the chain is Cytoplasmic; it reads MDFNNCGFID…SSFLFLKWHR (490 aa). 3 ANK repeats span residues 154–189, 260–289, and 368–397; these read GEFTPLHHVLRKSKVKAGKKELIQLFLDHPELDIDS, EYFGLLQESIKRGRQRAFDVILSTGMDINS, and GRLVPLFFAVKYRNTSAMQKLLKNGAYIGS. The helical transmembrane segment at 491–511 threads the bilayer; the sequence is LSVIFYLNFLIYSLFTASIIT. The Extracellular segment spans residues 512–523; that stretch reads YTLLKFHESDQR. Residues 524–544 form a helical membrane-spanning segment; it reads ALTAFFGLLSWLGISYLILRE. Over 545–555 the chain is Cytoplasmic; sequence CIQWIMSPVRY. Residues 556–576 form a helical membrane-spanning segment; sequence FWSITNIMEVALITLSIFTCM. Over 577–586 the chain is Extracellular; it reads ESSFDKETQR. The helical transmembrane segment at 587 to 607 threads the bilayer; sequence VLAVFTILLVSMEFCLLVGSL. Residues 608–628 lie on the Cytoplasmic side of the membrane; sequence PVLSISTHMLMLREVSNSFLK. Residues 629–649 form a helical membrane-spanning segment; sequence SFTLYSIFVLTFSLCFYILFG. Over 650–708 the chain is Extracellular; the sequence is KSVEEDQSKSATPCPPLGKKEGKDEEQGFNTFTKPIEAVIKTIVMLTGEFDAGSIQFTS. A disordered region spans residues 656 to 675; the sequence is QSKSATPCPPLGKKEGKDEE. A helical membrane pass occupies residues 709–729; sequence IYTYLIFLLFVIFMTIVLFNL. Residues 730 to 913 are Cytoplasmic-facing; it reads LNGLAVSDTQ…QLIQLVQDRK (184 aa).

This sequence belongs to the transient receptor (TC 1.A.4) family. Present in multidendritic neurons, chordotonal neurons, a subset of cells in the central nervous system and a subset of sensory neurons in the antennal-maxillary complex. Not detected in gonads and dorsal vessels (at protein level). Expressed in peripheral neurons that extend multiple branched dendrites beneath the larval epidermis, similar to vertebrate pain receptors.

Its subcellular location is the membrane. In terms of biological role, receptor-activated non-selective cation channel involved in detection of pain sensation due to high temperature. Involved in heat nociception by being activated by noxious temperature of 38 degrees Celsius. The chain is Transient receptor potential cation channel protein painless (pain) from Drosophila melanogaster (Fruit fly).